The chain runs to 50 residues: MNIHTYHHLLFPSLVFHQSSDVPNALSLHIHTYEYIIVVIDPFRITLAFR.

Functionally, regulatory peptide encoded by the primary transcript (pri-miR319a) of the microRNA miR319a that enhances the accumulation of its corresponding mature miRNA. Acts probably as a transcriptional activator of its corresponding pri-miRNA. This chain is Peptide encoded by miPEP319a, found in Arabidopsis thaliana (Mouse-ear cress).